A 197-amino-acid chain; its full sequence is Holliday junction branch migration complex subunit RuvA (197 aa).

Positions 1–63 (MINKIHGKVI…ENELKLFGFL (63 aa)) are domain I. The domain II stretch occupies residues 64-139 (NSDEREIFKE…KLLINSELES (76 aa)). Position 139 (Ser139) is a region of interest, flexible linker. The segment at 140–197 (TGLFRFKELEESIVSMGFDRKIVNSKIREAFNLAEFANLKDSEKEQFLFKEVLKRISN) is domain III.

This sequence belongs to the RuvA family. Homotetramer. Forms an RuvA(8)-RuvB(12)-Holliday junction (HJ) complex. HJ DNA is sandwiched between 2 RuvA tetramers; dsDNA enters through RuvA and exits via RuvB. An RuvB hexamer assembles on each DNA strand where it exits the tetramer. Each RuvB hexamer is contacted by two RuvA subunits (via domain III) on 2 adjacent RuvB subunits; this complex drives branch migration. In the full resolvosome a probable DNA-RuvA(4)-RuvB(12)-RuvC(2) complex forms which resolves the HJ.

The protein resides in the cytoplasm. In terms of biological role, the RuvA-RuvB-RuvC complex processes Holliday junction (HJ) DNA during genetic recombination and DNA repair, while the RuvA-RuvB complex plays an important role in the rescue of blocked DNA replication forks via replication fork reversal (RFR). RuvA specifically binds to HJ cruciform DNA, conferring on it an open structure. The RuvB hexamer acts as an ATP-dependent pump, pulling dsDNA into and through the RuvAB complex. HJ branch migration allows RuvC to scan DNA until it finds its consensus sequence, where it cleaves and resolves the cruciform DNA. The polypeptide is Holliday junction branch migration complex subunit RuvA (Borreliella burgdorferi (strain ATCC 35210 / DSM 4680 / CIP 102532 / B31) (Borrelia burgdorferi)).